Reading from the N-terminus, the 122-residue chain is Large ribosomal subunit protein uL18 (122 aa).

The segment covering Met-1–Leu-21 has biased composition (basic residues). Positions Met-1–Asp-26 are disordered.

This sequence belongs to the universal ribosomal protein uL18 family. Part of the 50S ribosomal subunit; part of the 5S rRNA/L5/L18/L25 subcomplex. Contacts the 5S and 23S rRNAs.

Its function is as follows. This is one of the proteins that bind and probably mediate the attachment of the 5S RNA into the large ribosomal subunit, where it forms part of the central protuberance. The polypeptide is Large ribosomal subunit protein uL18 (Parasynechococcus marenigrum (strain WH8102)).